A 316-amino-acid polypeptide reads, in one-letter code: 2,3-dihydroxyphenylpropionate/2,3-dihydroxicinnamic acid 1,2-dioxygenase (316 aa).

Histidine 118 (proton donor) is an active-site residue. Residue histidine 182 is the Proton acceptor of the active site.

The protein belongs to the LigB/MhpB extradiol dioxygenase family. As to quaternary structure, homotetramer. Fe(2+) is required as a cofactor.

It carries out the reaction 3-(2,3-dihydroxyphenyl)propanoate + O2 = (2Z,4E)-2-hydroxy-6-oxonona-2,4-dienedioate + H(+). The enzyme catalyses (2E)-3-(2,3-dihydroxyphenyl)prop-2-enoate + O2 = (2Z,4E,7E)-2-hydroxy-6-oxonona-2,4,7-trienedioate + H(+). The protein operates within aromatic compound metabolism; 3-phenylpropanoate degradation. Catalyzes the non-heme iron(II)-dependent oxidative cleavage of 2,3-dihydroxyphenylpropionic acid and 2,3-dihydroxicinnamic acid into 2-hydroxy-6-ketononadienedioate and 2-hydroxy-6-ketononatrienedioate, respectively. The sequence is that of 2,3-dihydroxyphenylpropionate/2,3-dihydroxicinnamic acid 1,2-dioxygenase from Mycolicibacterium vanbaalenii (strain DSM 7251 / JCM 13017 / BCRC 16820 / KCTC 9966 / NRRL B-24157 / PYR-1) (Mycobacterium vanbaalenii).